Here is a 500-residue protein sequence, read N- to C-terminus: Cytochrome P450 71B22 (500 aa).

Residues 1–21 (MSISLYFLLLLPLFLIFFKKL) form a helical membrane-spanning segment. Heme is bound at residue Cys-441.

This sequence belongs to the cytochrome P450 family. Requires heme as cofactor.

Its subcellular location is the membrane. The chain is Cytochrome P450 71B22 (CYP71B22) from Arabidopsis thaliana (Mouse-ear cress).